Here is a 283-residue protein sequence, read N- to C-terminus: Diaminopimelate epimerase (283 aa).

Substrate contacts are provided by N13, Q46, and N66. C75 acts as the Proton donor in catalysis. Substrate-binding positions include 76-77, N166, N199, and 217-218; these read GN and ER. The active-site Proton acceptor is C226. Residue 227 to 228 coordinates substrate; sequence GT.

It belongs to the diaminopimelate epimerase family. Homodimer.

The protein localises to the cytoplasm. It carries out the reaction (2S,6S)-2,6-diaminopimelate = meso-2,6-diaminopimelate. The protein operates within amino-acid biosynthesis; L-lysine biosynthesis via DAP pathway; DL-2,6-diaminopimelate from LL-2,6-diaminopimelate: step 1/1. In terms of biological role, catalyzes the stereoinversion of LL-2,6-diaminopimelate (L,L-DAP) to meso-diaminopimelate (meso-DAP), a precursor of L-lysine and an essential component of the bacterial peptidoglycan. The protein is Diaminopimelate epimerase of Herminiimonas arsenicoxydans.